The sequence spans 192 residues: Der GTPase-activating protein YihI (192 aa).

Residues Met-1–Gly-12 are compositionally biased toward basic residues. Disordered stretches follow at residues Met-1–Lys-87 and Asp-145–Lys-192. The segment covering Lys-13 to Glu-26 has biased composition (basic and acidic residues). Basic residues predominate over residues Arg-27 to Leu-36. Residues Asp-145–Leu-172 are compositionally biased toward acidic residues. The segment covering Pro-183–Lys-192 has biased composition (basic and acidic residues).

This sequence belongs to the YihI family. In terms of assembly, interacts with Der.

In terms of biological role, a GTPase-activating protein (GAP) that modifies Der/EngA GTPase function. May play a role in ribosome biogenesis. The polypeptide is Der GTPase-activating protein YihI (Aeromonas hydrophila subsp. hydrophila (strain ATCC 7966 / DSM 30187 / BCRC 13018 / CCUG 14551 / JCM 1027 / KCTC 2358 / NCIMB 9240 / NCTC 8049)).